Here is a 572-residue protein sequence, read N- to C-terminus: Arginine--tRNA ligase (572 aa).

The 'HIGH' region motif lies at 127–137 (ANPTGPLHVGH).

It belongs to the class-I aminoacyl-tRNA synthetase family. Monomer.

The protein resides in the cytoplasm. The catalysed reaction is tRNA(Arg) + L-arginine + ATP = L-arginyl-tRNA(Arg) + AMP + diphosphate. The sequence is that of Arginine--tRNA ligase from Vesicomyosocius okutanii subsp. Calyptogena okutanii (strain HA).